Here is a 223-residue protein sequence, read N- to C-terminus: Phosphoribosylformylglycinamidine synthase subunit PurQ (223 aa).

The 220-residue stretch at 4–223 (FAVVVFPGTN…FKGMVEWVRS (220 aa)) folds into the Glutamine amidotransferase type-1 domain. C85 serves as the catalytic Nucleophile. Catalysis depends on residues H196 and E198.

Part of the FGAM synthase complex composed of 1 PurL, 1 PurQ and 2 PurS subunits.

Its subcellular location is the cytoplasm. It carries out the reaction N(2)-formyl-N(1)-(5-phospho-beta-D-ribosyl)glycinamide + L-glutamine + ATP + H2O = 2-formamido-N(1)-(5-O-phospho-beta-D-ribosyl)acetamidine + L-glutamate + ADP + phosphate + H(+). The enzyme catalyses L-glutamine + H2O = L-glutamate + NH4(+). The protein operates within purine metabolism; IMP biosynthesis via de novo pathway; 5-amino-1-(5-phospho-D-ribosyl)imidazole from N(2)-formyl-N(1)-(5-phospho-D-ribosyl)glycinamide: step 1/2. In terms of biological role, part of the phosphoribosylformylglycinamidine synthase complex involved in the purines biosynthetic pathway. Catalyzes the ATP-dependent conversion of formylglycinamide ribonucleotide (FGAR) and glutamine to yield formylglycinamidine ribonucleotide (FGAM) and glutamate. The FGAM synthase complex is composed of three subunits. PurQ produces an ammonia molecule by converting glutamine to glutamate. PurL transfers the ammonia molecule to FGAR to form FGAM in an ATP-dependent manner. PurS interacts with PurQ and PurL and is thought to assist in the transfer of the ammonia molecule from PurQ to PurL. The chain is Phosphoribosylformylglycinamidine synthase subunit PurQ from Pyrococcus furiosus (strain ATCC 43587 / DSM 3638 / JCM 8422 / Vc1).